Consider the following 179-residue polypeptide: Replication restart protein DnaT (179 aa).

Over residues 151–168 the composition is skewed to polar residues; the sequence is SRSSNGGMPQRDINSVSE. The interval 151-179 is disordered; that stretch reads SRSSNGGMPQRDINSVSEPDNHIPPGFRG.

Belongs to the DnaT family. In terms of assembly, homooligomerizes. Interacts with PriB. Component of the replication restart primosome. Primosome assembly occurs via a 'hand-off' mechanism. PriA binds to replication forks, subsequently PriB then DnaT bind; DnaT then displaces ssDNA to generate the helicase loading substrate.

Functionally, involved in the restart of stalled replication forks, which reloads the replicative helicase on sites other than the origin of replication. Can function in multiple replication restart pathways. Displaces ssDNA from a PriB-ssDNA complex. Probably forms a spiral filament on ssDNA. This Salmonella heidelberg (strain SL476) protein is Replication restart protein DnaT.